The sequence spans 354 residues: Fructose-bisphosphate aldolase (354 aa).

Residue serine 50 participates in D-glyceraldehyde 3-phosphate binding. Aspartate 83 (proton donor) is an active-site residue. The Zn(2+) site is built by histidine 84, aspartate 105, glutamate 142, and histidine 198. Residue glycine 199 participates in dihydroxyacetone phosphate binding. Histidine 232 provides a ligand contact to Zn(2+). Residues 233 to 235 and 275 to 278 contribute to the dihydroxyacetone phosphate site; these read GSS and NIDT.

The protein belongs to the class II fructose-bisphosphate aldolase family. In terms of assembly, homodimer. It depends on Zn(2+) as a cofactor.

It catalyses the reaction beta-D-fructose 1,6-bisphosphate = D-glyceraldehyde 3-phosphate + dihydroxyacetone phosphate. It participates in carbohydrate biosynthesis; Calvin cycle. It functions in the pathway carbohydrate degradation; glycolysis; D-glyceraldehyde 3-phosphate and glycerone phosphate from D-glucose: step 4/4. With respect to regulation, activity is stimulated by Fe(2+) in autotrophically grown cells. Functionally, catalyzes the aldol condensation of dihydroxyacetone phosphate (DHAP or glycerone-phosphate) with glyceraldehyde 3-phosphate (G3P) to form fructose 1,6-bisphosphate (FBP) in gluconeogenesis and the reverse reaction in glycolysis. The sequence is that of Fructose-bisphosphate aldolase from Xanthobacter flavus.